Consider the following 131-residue polypeptide: Histone H2A.2 (131 aa).

Residues 1–22 form a disordered region; the sequence is MSGGKGKAGSSEKASTSRSAKA. N-acetylserine is present on Ser2. 2 positions are modified to N6-acetyllysine: Lys5 and Lys7. N5-methylglutamine is present on Gln105. Lys126 is covalently cross-linked (Glycyl lysine isopeptide (Lys-Gly) (interchain with G-Cter in SUMO)). Ser128 is modified (phosphoserine). The [ST]-Q motif signature appears at 128-129; it reads SQ.

Belongs to the histone H2A family. In terms of assembly, the nucleosome is a histone octamer containing two molecules each of H2A, H2B, H3 and H4 assembled in one H3-H4 heterotetramer and two H2A-H2B heterodimers. The octamer wraps approximately 147 bp of DNA. Phosphorylated to form H2AS128ph (gamma-H2A) in response to DNA double-strand breaks (DSBs) generated by exogenous genotoxic agents and by stalled replication forks. Phosphorylation is dependent on the DNA damage checkpoint kinases MEC1/ATR and TEL1/ATM, spreads on either side of a detected DSB site and may mark the surrounding chromatin for recruitment of proteins required for DNA damage signaling and repair. Gamma-H2A is removed from the DNA prior to the strand invasion-primer extension step of the repair process and subsequently dephosphorylated. Dephosphorylation is necessary for efficient recovery from the DNA damage checkpoint. In terms of processing, acetylated by ESA1 to form H2AK4ac and H2AK7ac.

Its subcellular location is the nucleus. It localises to the chromosome. Functionally, core component of nucleosome which plays a central role in DNA double strand break (DSB) repair. Nucleosomes wrap and compact DNA into chromatin, limiting DNA accessibility to the cellular machineries which require DNA as a template. Histones thereby play a central role in transcription regulation, DNA repair, DNA replication and chromosomal stability. DNA accessibility is regulated via a complex set of post-translational modifications of histones, also called histone code, and nucleosome remodeling. The sequence is that of Histone H2A.2 (HTA2) from Scheffersomyces stipitis (strain ATCC 58785 / CBS 6054 / NBRC 10063 / NRRL Y-11545) (Yeast).